A 246-amino-acid chain; its full sequence is 3-oxoacyl-[acyl-carrier-protein] reductase FabG (246 aa).

Residues 62-63 and Asn89 contribute to the NADP(+) site; that span reads NV. Position 141 (Ser141) interacts with substrate. The active-site Proton acceptor is the Tyr154. Residues 154 to 158 and Ile187 contribute to the NADP(+) site; that span reads YAASK.

The protein belongs to the short-chain dehydrogenases/reductases (SDR) family. As to quaternary structure, homotetramer.

It carries out the reaction a (3R)-hydroxyacyl-[ACP] + NADP(+) = a 3-oxoacyl-[ACP] + NADPH + H(+). Its pathway is lipid metabolism; fatty acid biosynthesis. Its function is as follows. Catalyzes the NADPH-dependent reduction of beta-ketoacyl-ACP substrates to beta-hydroxyacyl-ACP products, the first reductive step in the elongation cycle of fatty acid biosynthesis. This chain is 3-oxoacyl-[acyl-carrier-protein] reductase FabG (fabG), found in Thermotoga maritima (strain ATCC 43589 / DSM 3109 / JCM 10099 / NBRC 100826 / MSB8).